Consider the following 172-residue polypeptide: Crossover junction endodeoxyribonuclease RuvC (172 aa).

Active-site residues include D7, E67, and D140. The Mg(2+) site is built by D7, E67, and D140.

The protein belongs to the RuvC family. As to quaternary structure, homodimer which binds Holliday junction (HJ) DNA. The HJ becomes 2-fold symmetrical on binding to RuvC with unstacked arms; it has a different conformation from HJ DNA in complex with RuvA. In the full resolvosome a probable DNA-RuvA(4)-RuvB(12)-RuvC(2) complex forms which resolves the HJ. Mg(2+) is required as a cofactor.

It is found in the cytoplasm. It carries out the reaction Endonucleolytic cleavage at a junction such as a reciprocal single-stranded crossover between two homologous DNA duplexes (Holliday junction).. Functionally, the RuvA-RuvB-RuvC complex processes Holliday junction (HJ) DNA during genetic recombination and DNA repair. Endonuclease that resolves HJ intermediates. Cleaves cruciform DNA by making single-stranded nicks across the HJ at symmetrical positions within the homologous arms, yielding a 5'-phosphate and a 3'-hydroxyl group; requires a central core of homology in the junction. The consensus cleavage sequence is 5'-(A/T)TT(C/G)-3'. Cleavage occurs on the 3'-side of the TT dinucleotide at the point of strand exchange. HJ branch migration catalyzed by RuvA-RuvB allows RuvC to scan DNA until it finds its consensus sequence, where it cleaves and resolves the cruciform DNA. This Syntrophomonas wolfei subsp. wolfei (strain DSM 2245B / Goettingen) protein is Crossover junction endodeoxyribonuclease RuvC.